The primary structure comprises 448 residues: Phosphoglucosamine mutase (448 aa).

The active-site Phosphoserine intermediate is serine 104. Positions 104, 243, 245, and 247 each coordinate Mg(2+). Serine 104 carries the post-translational modification Phosphoserine.

The protein belongs to the phosphohexose mutase family. Mg(2+) is required as a cofactor. In terms of processing, activated by phosphorylation.

The enzyme catalyses alpha-D-glucosamine 1-phosphate = D-glucosamine 6-phosphate. Functionally, catalyzes the conversion of glucosamine-6-phosphate to glucosamine-1-phosphate. In Xylella fastidiosa (strain 9a5c), this protein is Phosphoglucosamine mutase.